Here is a 220-residue protein sequence, read N- to C-terminus: MIKIIITDDQDIVREGLASLLQLREELDVIATARNGQEAFEKAKELEPDIVLMDIRMPVSNGVEGTKLITSSLPSVKVLMLTTFKDSALIAEALEEGASGYLLKDMSADTIVKAVMTVHSGGMVLPPELTAQMLNEWKREKQLKGINEIEKPNELLDLTEREIEVLAELGYGLNNKEIAEKLYITEGTVKNHVSNIISKLAVRDRTQAAIYSVRYGVSVF.

Positions lysine 3–histidine 119 constitute a Response regulatory domain. A 4-aspartylphosphate modification is found at aspartate 54. The HTH luxR-type domain maps to lysine 151–glycine 216. Residues asparagine 175–serine 194 constitute a DNA-binding region (H-T-H motif).

Phosphorylated by LnrJ.

The protein localises to the cytoplasm. In terms of biological role, required for resistance to linearmycins, a family of antibiotic-specialized metabolites produced by some streptomycetes. Member of the two-component regulatory system LnrJ/LnrK, which induces expression of the LnrLMN ABC transporter in response to linearmycins and other polyenes. Probably binds to the promoter region of the lnrLMN operon and directly regulates its expression. May also promote biofilm formation. The polypeptide is Transcriptional regulatory protein LnrK (Bacillus subtilis (strain 168)).